We begin with the raw amino-acid sequence, 248 residues long: Metallo-beta-lactamase type 2 (248 aa).

The N-terminal stretch at 1 to 21 (MKGLKGLLVLALGFTGLQVFG) is a signal peptide. 5 residues coordinate Zn(2+): His97, His99, Asp101, His160, and Cys179. Position 182 (Lys182) interacts with substrate. His221 contributes to the Zn(2+) binding site.

Belongs to the metallo-beta-lactamase superfamily. Class-B beta-lactamase family. Monomer. The cofactor is Zn(2+).

The protein resides in the periplasm. The catalysed reaction is a beta-lactam + H2O = a substituted beta-amino acid. Confers resistance to the different beta-lactams antibiotics (penicillin, cephalosporin and carbapenem) via the hydrolysis of the beta-lactam ring. The sequence is that of Metallo-beta-lactamase type 2 (blaB8) from Elizabethkingia meningoseptica (Chryseobacterium meningosepticum).